The chain runs to 143 residues: Ribosome-binding factor A (143 aa).

The disordered stretch occupies residues 123–143 (DKSLQENYKQNDKETKAEKLR).

The protein belongs to the RbfA family. As to quaternary structure, monomer. Binds 30S ribosomal subunits, but not 50S ribosomal subunits or 70S ribosomes.

Its subcellular location is the cytoplasm. Its function is as follows. One of several proteins that assist in the late maturation steps of the functional core of the 30S ribosomal subunit. Associates with free 30S ribosomal subunits (but not with 30S subunits that are part of 70S ribosomes or polysomes). Required for efficient processing of 16S rRNA. May interact with the 5'-terminal helix region of 16S rRNA. The protein is Ribosome-binding factor A of Francisella tularensis subsp. mediasiatica (strain FSC147).